The primary structure comprises 117 residues: Small ribosomal subunit protein uS8c (117 aa).

This sequence belongs to the universal ribosomal protein uS8 family. Part of the 30S ribosomal subunit.

The protein resides in the plastid. Its subcellular location is the chloroplast. Its function is as follows. One of the primary rRNA binding proteins, it binds directly to 16S rRNA central domain where it helps coordinate assembly of the platform of the 30S subunit. The polypeptide is Small ribosomal subunit protein uS8c (rps8) (Cyanidioschyzon merolae (strain NIES-3377 / 10D) (Unicellular red alga)).